Consider the following 155-residue polypeptide: Reticulon-like protein B23 (155 aa).

Residues 1–155 (MGEMGKAIGL…LNRRNGEILD (155 aa)) form the Reticulon domain. A run of 2 helical transmembrane segments spans residues 30–50 (SLIS…GLLF) and 117–137 (IISG…SMLF).

It localises to the endoplasmic reticulum membrane. The sequence is that of Reticulon-like protein B23 (RTNLB23) from Arabidopsis thaliana (Mouse-ear cress).